The chain runs to 245 residues: Ribonuclease PH (245 aa).

Phosphate-binding positions include R86 and 124–126; that span reads GTR.

Belongs to the RNase PH family. In terms of assembly, homohexameric ring arranged as a trimer of dimers.

The enzyme catalyses tRNA(n+1) + phosphate = tRNA(n) + a ribonucleoside 5'-diphosphate. Its function is as follows. Phosphorolytic 3'-5' exoribonuclease that plays an important role in tRNA 3'-end maturation. Removes nucleotide residues following the 3'-CCA terminus of tRNAs; can also add nucleotides to the ends of RNA molecules by using nucleoside diphosphates as substrates, but this may not be physiologically important. Probably plays a role in initiation of 16S rRNA degradation (leading to ribosome degradation) during starvation. In Bacillus anthracis (strain A0248), this protein is Ribonuclease PH.